A 379-amino-acid polypeptide reads, in one-letter code: Anhydro-N-acetylmuramic acid kinase (379 aa).

12–19 (GTSLDGMD) is an ATP binding site.

The protein belongs to the anhydro-N-acetylmuramic acid kinase family.

It catalyses the reaction 1,6-anhydro-N-acetyl-beta-muramate + ATP + H2O = N-acetyl-D-muramate 6-phosphate + ADP + H(+). The protein operates within amino-sugar metabolism; 1,6-anhydro-N-acetylmuramate degradation. It participates in cell wall biogenesis; peptidoglycan recycling. In terms of biological role, catalyzes the specific phosphorylation of 1,6-anhydro-N-acetylmuramic acid (anhMurNAc) with the simultaneous cleavage of the 1,6-anhydro ring, generating MurNAc-6-P. Is required for the utilization of anhMurNAc either imported from the medium or derived from its own cell wall murein, and thus plays a role in cell wall recycling. This Gloeobacter violaceus (strain ATCC 29082 / PCC 7421) protein is Anhydro-N-acetylmuramic acid kinase.